A 204-amino-acid polypeptide reads, in one-letter code: MIGKLSGKVDSQGDDYVIIDVNGVGYLVYASGKTLGTLAEGEFYKLFIETHVREEHIHLYGFLTLEEKIFFNLLQSVNGIGTRMALFILSSLTPSDIQIAVNNEDKNIFKAISGVGAKLAERIVLELKGKVAKISSGSAIIKESLNIKNITPVASNEVIKALVNLGFSRFEAQNAVQGIITQNPEISIDELIKTALKNRNSNFS.

The tract at residues 1–63 (MIGKLSGKVD…EEHIHLYGFL (63 aa)) is domain I. The tract at residues 64–142 (TLEEKIFFNL…KISSGSAIIK (79 aa)) is domain II. Positions 143-149 (ESLNIKN) are flexible linker. Residues 150-204 (ITPVASNEVIKALVNLGFSRFEAQNAVQGIITQNPEISIDELIKTALKNRNSNFS) are domain III.

Belongs to the RuvA family. As to quaternary structure, homotetramer. Forms an RuvA(8)-RuvB(12)-Holliday junction (HJ) complex. HJ DNA is sandwiched between 2 RuvA tetramers; dsDNA enters through RuvA and exits via RuvB. An RuvB hexamer assembles on each DNA strand where it exits the tetramer. Each RuvB hexamer is contacted by two RuvA subunits (via domain III) on 2 adjacent RuvB subunits; this complex drives branch migration. In the full resolvosome a probable DNA-RuvA(4)-RuvB(12)-RuvC(2) complex forms which resolves the HJ.

The protein resides in the cytoplasm. Functionally, the RuvA-RuvB-RuvC complex processes Holliday junction (HJ) DNA during genetic recombination and DNA repair, while the RuvA-RuvB complex plays an important role in the rescue of blocked DNA replication forks via replication fork reversal (RFR). RuvA specifically binds to HJ cruciform DNA, conferring on it an open structure. The RuvB hexamer acts as an ATP-dependent pump, pulling dsDNA into and through the RuvAB complex. HJ branch migration allows RuvC to scan DNA until it finds its consensus sequence, where it cleaves and resolves the cruciform DNA. This Rickettsia rickettsii (strain Iowa) protein is Holliday junction branch migration complex subunit RuvA.